The chain runs to 261 residues: SURF1-like protein (261 aa).

2 helical membrane passes run 17–37 and 223–243; these read LYWALLSVPVVTFGLGTWQIF and LSYIITWYSISAITLAMWVFL.

This sequence belongs to the SURF1 family.

It is found in the mitochondrion inner membrane. Its function is as follows. Probably involved in the biogenesis of the COX complex. This chain is SURF1-like protein, found in Monosiga brevicollis (Choanoflagellate).